The sequence spans 557 residues: CCR4-NOT transcription complex subunit 6 (557 aa).

LRR repeat units lie at residues 52–73 (HLTALHLSDNSLSCIPSDIAKL), 75–96 (NLVYLDLSHNQIQSLPAELGNM), 98–120 (SLRELHLNYNQLRVLPFELGKLF), and 121–143 (QLQTLSLKGNPLTQDILNLCLEP). A nuclease domain region spans residues 153 to 557 (LLDNLSGTAK…VNGIHLPGRR (405 aa)). Glu-240 is a Mg(2+) binding site. Residues Glu-240, Glu-276, His-361, and Pro-366 each coordinate substrate. Mg(2+) is bound at residue Asp-412. Asp-412 functions as the Proton donor/acceptor in the catalytic mechanism. Residues Asn-414, Asn-481, and Phe-486 each contribute to the substrate site.

Belongs to the CCR4/nocturin family. As to quaternary structure, component of the CCR4-NOT complex; distinct complexes seem to exist that differ in the participation of probably mutually exclusive catalytic subunits; the complex contains two deadenylase subunits, CNOT6 or CNOT6L, and CNOT7 or CNOT8. Interacts with CNOT7 and CNOT8. Interacts with UNR. Interacts with ZFP36L1 (via N-terminus). Interacts with ZNF335. It depends on Mg(2+) as a cofactor.

The protein localises to the cytoplasm. It is found in the nucleus. The catalysed reaction is Exonucleolytic cleavage of poly(A) to 5'-AMP.. Its function is as follows. Poly(A) nuclease with 3'-5' RNase activity. Catalytic component of the CCR4-NOT complex which is one of the major cellular mRNA deadenylases and is linked to various cellular processes including bulk mRNA degradation, miRNA-mediated repression, translational repression during translational initiation and general transcription regulation. Additional complex functions may be a consequence of its influence on mRNA expression. Involved in mRNA decay mediated by the major-protein-coding determinant of instability (mCRD) of the FOS gene in the cytoplasm. In the presence of ZNF335, enhances ligand-dependent transcriptional activity of nuclear hormone receptors. Mediates cell proliferation and cell survival and prevents cellular senescence. In Mus musculus (Mouse), this protein is CCR4-NOT transcription complex subunit 6 (Cnot6).